The primary structure comprises 554 residues: Hydroxylamine reductase (554 aa).

Cys3, Cys6, Cys18, and Cys25 together coordinate [2Fe-2S] cluster. Residues His252, Glu276, Cys320, Cys408, Cys436, Cys461, Glu495, and Lys497 each contribute to the hybrid [4Fe-2O-2S] cluster site. Position 408 is a cysteine persulfide (Cys408).

The protein belongs to the HCP family. It depends on [2Fe-2S] cluster as a cofactor. Hybrid [4Fe-2O-2S] cluster is required as a cofactor.

It is found in the cytoplasm. The catalysed reaction is A + NH4(+) + H2O = hydroxylamine + AH2 + H(+). Catalyzes the reduction of hydroxylamine to form NH(3) and H(2)O. In Shewanella baltica (strain OS155 / ATCC BAA-1091), this protein is Hydroxylamine reductase.